A 354-amino-acid chain; its full sequence is MNALELHAVHKSFGGVPAVQDISLSMPAGSRTAIVGPSGSGKTTLLRMIAGFEFPDRGRISLNGQVLADAQGAVPAHQRLIGYVPQDGALFPHLNVAANIGFGLTGKNPQRQQRIAELLDMVALDSSLAARWPHELSGGQQQRVALARALAQRPRLMLLDEPFSALDTGLRASMRKAVARLLAEAGVTTILVTHDQAEALSFADQLAVMRQGRLVQAGAPLELYQHPRDAQTALFLGEAVLLPAQLDQGLAQCDLGQVPIRERSLKGPARIMLRPEQLLVLADDGDGAGSCPGVVRDCDFAGNTCTLSIGVAGAGGHEQLVPVRSSGLHALPVGSRVRIRTLGHAHVLGAAPGA.

One can recognise an ABC transporter domain in the interval 4 to 236; it reads LELHAVHKSF…PRDAQTALFL (233 aa). 36 to 43 contributes to the ATP binding site; the sequence is GPSGSGKT.

This sequence belongs to the ABC transporter superfamily. Fe(3+) ion importer (TC 3.A.1.10) family. In terms of assembly, the complex is composed of two ATP-binding proteins (FbpC), two transmembrane proteins (FbpB) and a solute-binding protein (FbpA).

The protein resides in the cell inner membrane. The catalysed reaction is Fe(3+)(out) + ATP + H2O = Fe(3+)(in) + ADP + phosphate + H(+). Functionally, part of the ABC transporter complex FbpABC involved in Fe(3+) ions import. Responsible for energy coupling to the transport system. The chain is Fe(3+) ions import ATP-binding protein FbpC from Pseudomonas fluorescens (strain ATCC BAA-477 / NRRL B-23932 / Pf-5).